The primary structure comprises 142 residues: ATP synthase epsilon chain (142 aa).

It belongs to the ATPase epsilon chain family. In terms of assembly, F-type ATPases have 2 components, CF(1) - the catalytic core - and CF(0) - the membrane proton channel. CF(1) has five subunits: alpha(3), beta(3), gamma(1), delta(1), epsilon(1). CF(0) has three main subunits: a, b and c.

It localises to the cell inner membrane. Functionally, produces ATP from ADP in the presence of a proton gradient across the membrane. The sequence is that of ATP synthase epsilon chain from Shewanella putrefaciens (strain CN-32 / ATCC BAA-453).